The following is a 186-amino-acid chain: Ribosome-recycling factor (186 aa).

The protein belongs to the RRF family.

The protein localises to the cytoplasm. In terms of biological role, responsible for the release of ribosomes from messenger RNA at the termination of protein biosynthesis. May increase the efficiency of translation by recycling ribosomes from one round of translation to another. This chain is Ribosome-recycling factor, found in Bartonella tribocorum (strain CIP 105476 / IBS 506).